The sequence spans 357 residues: Glucose-6-phosphatase catalytic subunit 1 (357 aa).

Topologically, residues 1 to 28 (MEKGMNVLHDFGIQSTHYLQVNYQNSQD) are lumenal. The chain crosses the membrane as a helical span at residues 29 to 49 (WFILVSVIADLRNAFYVLFPI). The Cytoplasmic portion of the chain corresponds to 50–60 (WFHLREAVGIK). A helical membrane pass occupies residues 61-81 (LLWVAVIGDWLNLVFKWILFG). Residues 82–117 (QRPYWWVLDTDYYSNTSAPLIKQFPVTCETGPGSPS) lie on the Lumenal side of the membrane. R83 provides a ligand contact to substrate. N-linked (GlcNAc...) asparagine glycosylation is present at N96. The helical transmembrane segment at 118 to 138 (GHAMGTAGVYYVMVTSTLSIF) threads the bilayer. The active-site Proton donor is H119. The Cytoplasmic portion of the chain corresponds to 139–147 (RGKKKPTYR). The helical transmembrane segment at 148-168 (FRCLNVMLWLGFWVVQLNVCL) threads the bilayer. Over 169–170 (SR) the chain is Lumenal. R170 contacts substrate. Residues 171-191 (IYLAAHFPHQVVAGVLSGIAV) form a helical membrane-spanning segment. Catalysis depends on H176, which acts as the Nucleophile. Residues 192–209 (AETFRHIQSIYNASLKKY) are Cytoplasmic-facing. The helical transmembrane segment at 210-230 (FLITCFLFSFAIGFYLLLKWL) threads the bilayer. Over 231–254 (GVDLLWTLEKAKRRCERPEWVHID) the chain is Lumenal. The helical transmembrane segment at 255–275 (TTPFASLLKNLGTLFGLGLAL) threads the bilayer. The Cytoplasmic segment spans residues 276-291 (NSSMYRESCKGKLSKW). The helical transmembrane segment at 292–312 (FPFRLSCIVASLVLLHLFDSL) threads the bilayer. Residues 313-320 (KPPSQIEL) are Lumenal-facing. Residues 321 to 341 (IFYVLSFCKSAAVPLASVSLI) form a helical membrane-spanning segment. Residues 342–357 (PYCLAWVLGQPNKKTV) are Cytoplasmic-facing. Positions 354–357 (KKTV) match the Prevents secretion from ER motif.

This sequence belongs to the glucose-6-phosphatase family.

Its subcellular location is the endoplasmic reticulum membrane. It catalyses the reaction D-glucose 6-phosphate + H2O = D-glucose + phosphate. It participates in carbohydrate biosynthesis; gluconeogenesis. In terms of biological role, hydrolyzes glucose-6-phosphate to glucose in the endoplasmic reticulum. Forms with the glucose-6-phosphate transporter (SLC37A4/G6PT) the complex responsible for glucose production in the terminal step of glycogenolysis and gluconeogenesis. Hence, it is the key enzyme in homeostatic regulation of blood glucose levels. This chain is Glucose-6-phosphatase catalytic subunit 1 (G6PC1), found in Bos taurus (Bovine).